Reading from the N-terminus, the 385-residue chain is NifS/IcsS protein homolog (385 aa).

Pyridoxal 5'-phosphate is bound by residues 69-70 (GT), N149, Q178, and 199-201 (SSH). K202 carries the N6-(pyridoxal phosphate)lysine modification. T237 contributes to the pyridoxal 5'-phosphate binding site. C325 serves as the catalytic Cysteine persulfide intermediate. C325 is a binding site for [2Fe-2S] cluster.

Belongs to the class-V pyridoxal-phosphate-dependent aminotransferase family. NifS/IscS subfamily. Pyridoxal 5'-phosphate serves as cofactor.

The protein is NifS/IcsS protein homolog of Lactobacillus delbrueckii subsp. bulgaricus (strain ATCC 11842 / DSM 20081 / BCRC 10696 / JCM 1002 / NBRC 13953 / NCIMB 11778 / NCTC 12712 / WDCM 00102 / Lb 14).